The sequence spans 938 residues: Respiratory burst oxidase homolog protein C (938 aa).

Positions 1-63 (MQNSENHHPH…DIGTSAGAGA (63 aa)) are disordered. The Cytoplasmic segment spans residues 1–369 (MQNSENHHPH…MYFLLDNWQR (369 aa)). Residues 115 to 141 (ASLVRNASSRIRQVSQELKRLASLNKR) are a coiled coil. 2 EF-hand-like regions span residues 185-195 (TAPTTGLLPRA) and 222-233 (RNITTDSINKAQ). 2 consecutive EF-hand domains span residues 245 to 280 (SFDT…SASA) and 289 to 324 (QSDE…APNQ). Ca(2+) is bound by residues Asp-258, Asp-260, Asp-262, Arg-264, and Glu-269. Residues 370–390 (VWVLLLWIGIMAVLFTWKYIQ) traverse the membrane as a helical segment. The Extracellular portion of the chain corresponds to 391–402 (YKQKAAYDVMGP). A helical membrane pass occupies residues 403–423 (CVCLAKGAAETIKLNMAIILL). The region spanning 408 to 565 (KGAAETIKLN…LFIIVYTLLI (158 aa)) is the Ferric oxidoreductase domain. Topologically, residues 424-454 (PVCRNTITWLRNKTRLGSAVPFDDNLNFHKV) are cytoplasmic. Residues 455 to 475 (IAVAIALGVAIHGLAHLTCDF) traverse the membrane as a helical segment. Topologically, residues 476–509 (PKLLNASEEAYEPMIYYFGEQPESYWWFVRGVEG) are extracellular. The helical transmembrane segment at 510-530 (VTGIIMVVLMAIAFTLATPWF) threads the bilayer. The Cytoplasmic portion of the chain corresponds to 531-545 (RRGRVSFPKPFHKLT). A helical membrane pass occupies residues 546-566 (GFNAFWYSHHLFIIVYTLLIV). The Extracellular portion of the chain corresponds to 567–580 (HGEKLYITKDWYKR). Residues 581-599 (STWMYLTVPLVLYAGERLL) traverse the membrane as a helical segment. The 129-residue stretch at 599-727 (LRAFRSSIKA…DGPYGAPAQD (129 aa)) folds into the FAD-binding FR-type domain. Over 600 to 732 (RAFRSSIKAV…APAQDYKQYE (133 aa)) the chain is Cytoplasmic. Residues 733 to 753 (VVLLVGLGIGATPMISIVKDI) traverse the membrane as a helical segment. Residues 754 to 938 (VNNMKAMDEE…TKFDFHKENF (185 aa)) lie on the Extracellular side of the membrane. Positions 762–796 (EEENSLENGNGMSNAAQNASPNMAQKRGKSSSASG) are disordered. Positions 767-784 (LENGNGMSNAAQNASPNM) are enriched in polar residues.

The protein belongs to the RBOH (TC 5.B.1.3) family. In terms of assembly, monomer and homodimer. Phosphorylated by CPK. Expressed in leaves.

The protein localises to the membrane. Its function is as follows. Calcium-dependent NADPH oxidase that generates superoxide. May be responsible for the oxidative burst in response to pathogen attack in the leaves. This chain is Respiratory burst oxidase homolog protein C (RBOHC), found in Solanum tuberosum (Potato).